A 757-amino-acid polypeptide reads, in one-letter code: Endonuclease MutS2 (757 aa).

321 to 328 is a binding site for ATP; sequence GPNMGGKT. The region spanning 681 to 756 is the Smr domain; that stretch reads IDIRGMTVEE…GTGVTVVEVE (76 aa).

It belongs to the DNA mismatch repair MutS family. MutS2 subfamily. Homodimer. Binds to stalled ribosomes, contacting rRNA.

Endonuclease that is involved in the suppression of homologous recombination and thus may have a key role in the control of bacterial genetic diversity. Functionally, acts as a ribosome collision sensor, splitting the ribosome into its 2 subunits. Detects stalled/collided 70S ribosomes which it binds and splits by an ATP-hydrolysis driven conformational change. Acts upstream of the ribosome quality control system (RQC), a ribosome-associated complex that mediates the extraction of incompletely synthesized nascent chains from stalled ribosomes and their subsequent degradation. Probably generates substrates for RQC. The protein is Endonuclease MutS2 of Thermotoga neapolitana (strain ATCC 49049 / DSM 4359 / NBRC 107923 / NS-E).